A 238-amino-acid chain; its full sequence is Ribonuclease PH (238 aa).

Residues R86 and 124-126 (GTR) contribute to the phosphate site.

It belongs to the RNase PH family. In terms of assembly, homohexameric ring arranged as a trimer of dimers.

It carries out the reaction tRNA(n+1) + phosphate = tRNA(n) + a ribonucleoside 5'-diphosphate. Phosphorolytic 3'-5' exoribonuclease that plays an important role in tRNA 3'-end maturation. Removes nucleotide residues following the 3'-CCA terminus of tRNAs; can also add nucleotides to the ends of RNA molecules by using nucleoside diphosphates as substrates, but this may not be physiologically important. Probably plays a role in initiation of 16S rRNA degradation (leading to ribosome degradation) during starvation. The protein is Ribonuclease PH of Haemophilus influenzae (strain PittGG).